The chain runs to 392 residues: 23S rRNA (uracil(747)-C(5))-methyltransferase RlmC (392 aa).

4 residues coordinate [4Fe-4S] cluster: C4, C12, C15, and C93. S-adenosyl-L-methionine contacts are provided by Q218, F247, E275, and N321. C348 serves as the catalytic Nucleophile.

The protein belongs to the class I-like SAM-binding methyltransferase superfamily. RNA M5U methyltransferase family. RlmC subfamily.

It catalyses the reaction uridine(747) in 23S rRNA + S-adenosyl-L-methionine = 5-methyluridine(747) in 23S rRNA + S-adenosyl-L-homocysteine + H(+). Its function is as follows. Catalyzes the formation of 5-methyl-uridine at position 747 (m5U747) in 23S rRNA. The polypeptide is 23S rRNA (uracil(747)-C(5))-methyltransferase RlmC (Haemophilus influenzae (strain 86-028NP)).